Reading from the N-terminus, the 136-residue chain is Large ribosomal subunit protein uL16 (136 aa).

The protein belongs to the universal ribosomal protein uL16 family. As to quaternary structure, part of the 50S ribosomal subunit.

Binds 23S rRNA and is also seen to make contacts with the A and possibly P site tRNAs. The protein is Large ribosomal subunit protein uL16 of Edwardsiella ictaluri (strain 93-146).